Reading from the N-terminus, the 85-residue chain is RNA-binding protein Hfq (85 aa).

Residues Asp10–Val70 form the Sm domain.

Belongs to the Hfq family. In terms of assembly, homohexamer.

RNA chaperone that binds small regulatory RNA (sRNAs) and mRNAs to facilitate mRNA translational regulation in response to envelope stress, environmental stress and changes in metabolite concentrations. Also binds with high specificity to tRNAs. This is RNA-binding protein Hfq from Carboxydothermus hydrogenoformans (strain ATCC BAA-161 / DSM 6008 / Z-2901).